Reading from the N-terminus, the 310-residue chain is MIIVTGGAGFIGSNIVKALNDKGITDILVVDNLKDGTKFVNLVDLDIADYMDKEDFLIQIMAGEEFGDVEAIFHEGACSSTTEWDGKYMMDNNYQYSKELLHYCLEREIPFLYASSAATYGGRTSDFIESREYEKPLNVYGYSKFLFDEYVRQILPEANSQIVGFRYFNVYGPREGHKGSMASVAFHLNTQLNKGESPKLFEGSENFKRDFVYVGDVADVNLWFLENGVSGIFNLGTGRAESFQAVADATLAYHKKGQIEYIPFPDKLKGRYQAFTQADLTNLRAAGYDKPFKTVAEGVMEYMAWLNRDA.

Residues 10–11, 31–32, lysine 38, lysine 53, 75–79, and asparagine 92 each bind NADP(+); these read FI, DN, and EGACS. The active-site Proton acceptor is the tyrosine 140. Lysine 144 lines the NADP(+) pocket. Residue asparagine 169 participates in substrate binding. Residues valine 170 and lysine 178 each coordinate NADP(+). Lysine 178 serves as the catalytic Proton acceptor. Substrate-binding positions include serine 180, histidine 187, 201–204, and arginine 209; that span reads FEGS. Lysine 267 is modified (N6-acetyllysine). Position 272 (tyrosine 272) interacts with substrate.

The protein belongs to the NAD(P)-dependent epimerase/dehydratase family. HldD subfamily. In terms of assembly, homopentamer. The cofactor is NADP(+).

It catalyses the reaction ADP-D-glycero-beta-D-manno-heptose = ADP-L-glycero-beta-D-manno-heptose. It functions in the pathway nucleotide-sugar biosynthesis; ADP-L-glycero-beta-D-manno-heptose biosynthesis; ADP-L-glycero-beta-D-manno-heptose from D-glycero-beta-D-manno-heptose 7-phosphate: step 4/4. In terms of biological role, catalyzes the interconversion between ADP-D-glycero-beta-D-manno-heptose and ADP-L-glycero-beta-D-manno-heptose via an epimerization at carbon 6 of the heptose. This chain is ADP-L-glycero-D-manno-heptose-6-epimerase, found in Escherichia coli (strain ATCC 8739 / DSM 1576 / NBRC 3972 / NCIMB 8545 / WDCM 00012 / Crooks).